Consider the following 546-residue polypeptide: MSAKDVKFGGDARVRMMEGVNILANAVKVTLGPKGRNVVLEKSFGAPTVTKDGVSVAKEIELKDKFENMGAQMVKEVASKTSDIAGDGTTTATVLAQAMVREGLKAVAAGMNPMDLKRGMDKAVEAATEELKKLSKPCPRPMAIAQVGTISANSDDSIGTIIAEAMEKVGKEGVITVEDGTSLQNELDVVEGMQFDRGYLSPYFINNQQSQSAELDAPYILLYDKKISNIRDLLPVLEGVAKAGKPLLIIAEDVEGEALATLVVNTIRGIVKVCAVKAPGFGDRRKAMLQDIAILTGATVISEEVGLSLEKATLTDLGTAKRVQVGKDETTIIDGSGSEIDIKARCEQIRAQVEETSSDYDREKLQERLAKLAGGVAVIKVGAATEIEMKEKKARVEDALHATRAAVEEGIVPGGGVALVRAIAAVKDLKGANHDQDVGIAIARRAMEEPLRQIVANAGEEPSVILHKVAEGTGNFGYNAANGEYGDMVEMGILDPTKVTRSALQNSCSVAGLMITTEAMIADEPKDDAPAMPGGGMGDMGGMGMM.

ATP contacts are provided by residues 30–33 (TLGP), lysine 51, 87–91 (DGTTT), glycine 415, 479–481 (NAA), and aspartate 495.

Belongs to the chaperonin (HSP60) family. In terms of assembly, forms a cylinder of 14 subunits composed of two heptameric rings stacked back-to-back. Interacts with the co-chaperonin GroES.

Its subcellular location is the cytoplasm. It catalyses the reaction ATP + H2O + a folded polypeptide = ADP + phosphate + an unfolded polypeptide.. In terms of biological role, together with its co-chaperonin GroES, plays an essential role in assisting protein folding. The GroEL-GroES system forms a nano-cage that allows encapsulation of the non-native substrate proteins and provides a physical environment optimized to promote and accelerate protein folding. This chain is Chaperonin GroEL, found in Allochromatium vinosum (Chromatium vinosum).